We begin with the raw amino-acid sequence, 169 residues long: MTKTDRVCVGAIAGAFGVKGEVRLKSFCTEPTDIASYGPLSTEKGDRSFRVTLTRPVAGGLGARLSDVTTKEEADALRGVGLYVDRARLPSLGDDEFYHADLIGLEVRDTGGALLGRVHAVHNHGAGDILEVAGAAGREGLLLPFTRAVVPTVDLAAGRIVADPPEGLD.

One can recognise a PRC barrel domain in the interval 94–168 (DDEFYHADLI…RIVADPPEGL (75 aa)).

It belongs to the RimM family. As to quaternary structure, binds ribosomal protein uS19.

The protein resides in the cytoplasm. Functionally, an accessory protein needed during the final step in the assembly of 30S ribosomal subunit, possibly for assembly of the head region. Essential for efficient processing of 16S rRNA. May be needed both before and after RbfA during the maturation of 16S rRNA. It has affinity for free ribosomal 30S subunits but not for 70S ribosomes. This chain is Ribosome maturation factor RimM, found in Cereibacter sphaeroides (strain ATCC 17023 / DSM 158 / JCM 6121 / CCUG 31486 / LMG 2827 / NBRC 12203 / NCIMB 8253 / ATH 2.4.1.) (Rhodobacter sphaeroides).